A 330-amino-acid chain; its full sequence is Lipoyl synthase (330 aa).

Residues 1 to 31 form a disordered region; that stretch reads MSDAPIATSSEVTQSPADYDPTKKQKSAEKT. The segment covering 7 to 16 has biased composition (polar residues); that stretch reads ATSSEVTQSP. The span at 20–31 shows a compositional bias: basic and acidic residues; that stretch reads DPTKKQKSAEKT. [4Fe-4S] cluster contacts are provided by Cys-77, Cys-82, Cys-88, Cys-103, Cys-107, Cys-110, and Ser-317. Residues 88–306 form the Radical SAM core domain; that stretch reads CFGKGTATFM…EEEAYKMGFT (219 aa).

Belongs to the radical SAM superfamily. Lipoyl synthase family. [4Fe-4S] cluster serves as cofactor.

The protein localises to the cytoplasm. It carries out the reaction [[Fe-S] cluster scaffold protein carrying a second [4Fe-4S](2+) cluster] + N(6)-octanoyl-L-lysyl-[protein] + 2 oxidized [2Fe-2S]-[ferredoxin] + 2 S-adenosyl-L-methionine + 4 H(+) = [[Fe-S] cluster scaffold protein] + N(6)-[(R)-dihydrolipoyl]-L-lysyl-[protein] + 4 Fe(3+) + 2 hydrogen sulfide + 2 5'-deoxyadenosine + 2 L-methionine + 2 reduced [2Fe-2S]-[ferredoxin]. It participates in protein modification; protein lipoylation via endogenous pathway; protein N(6)-(lipoyl)lysine from octanoyl-[acyl-carrier-protein]: step 2/2. Its function is as follows. Catalyzes the radical-mediated insertion of two sulfur atoms into the C-6 and C-8 positions of the octanoyl moiety bound to the lipoyl domains of lipoate-dependent enzymes, thereby converting the octanoylated domains into lipoylated derivatives. The protein is Lipoyl synthase of Cupriavidus metallidurans (strain ATCC 43123 / DSM 2839 / NBRC 102507 / CH34) (Ralstonia metallidurans).